The sequence spans 131 residues: Small ribosomal subunit protein uS8 (131 aa).

Belongs to the universal ribosomal protein uS8 family. In terms of assembly, part of the 30S ribosomal subunit. Contacts proteins S5 and S12.

Its function is as follows. One of the primary rRNA binding proteins, it binds directly to 16S rRNA central domain where it helps coordinate assembly of the platform of the 30S subunit. The sequence is that of Small ribosomal subunit protein uS8 from Acinetobacter baylyi (strain ATCC 33305 / BD413 / ADP1).